The sequence spans 244 residues: MVRVTLVNYTRRPLETITWAALVSYWDEWSTESFEKINEDDVKAHLPRILGYGHESILEHATFTFSIEGCSRVCTHQLVRHRIASYTQQSQRYIVLNEENVEETFVIPESIKKDRELYEKWKKAMAETIKLYKESLKRGIHQEDARFILPQAVRSKIVVTMNLRELKHFFGLRLCERAQWEIREVAWKMLEEIAKREELRPIIKWAKLGPRCIQLGYCPERELMPPGCFKRTRERWMKLLEKPL.

Residues 2–207 (VRVTLVNYTR…ELRPIIKWAK (206 aa)) form the ThyX domain. Residues serine 56, 80–82 (RHR), and glutamine 88 each bind FAD. Residues 77–80 (QLVR), 88–92 (QQSQR), and arginine 146 contribute to the dUMP site. Positions 80–90 (RHRIASYTQQS) match the ThyX motif motif. Residues 162–164 (NLR) and histidine 168 each bind FAD. Arginine 173 contacts dUMP. Catalysis depends on arginine 173, which acts as the Involved in ionization of N3 of dUMP, leading to its activation.

It belongs to the thymidylate synthase ThyX family. Homotetramer. FAD is required as a cofactor.

The enzyme catalyses dUMP + (6R)-5,10-methylene-5,6,7,8-tetrahydrofolate + NADPH + H(+) = dTMP + (6S)-5,6,7,8-tetrahydrofolate + NADP(+). The protein operates within pyrimidine metabolism; dTTP biosynthesis. Its function is as follows. Catalyzes the reductive methylation of 2'-deoxyuridine-5'-monophosphate (dUMP) to 2'-deoxythymidine-5'-monophosphate (dTMP) while utilizing 5,10-methylenetetrahydrofolate (mTHF) as the methyl donor, and NADPH and FADH(2) as the reductant. The sequence is that of Flavin-dependent thymidylate synthase from Pyrococcus abyssi (strain GE5 / Orsay).